A 601-amino-acid polypeptide reads, in one-letter code: Elongation factor 4 (601 aa).

The tr-type G domain occupies 7–189 (KNIRNFSIVA…AIVTRLPPPM (183 aa)). GTP contacts are provided by residues 19–24 (DHGKST) and 136–139 (NKVD).

Belongs to the TRAFAC class translation factor GTPase superfamily. Classic translation factor GTPase family. LepA subfamily.

The protein resides in the cell inner membrane. The catalysed reaction is GTP + H2O = GDP + phosphate + H(+). Functionally, required for accurate and efficient protein synthesis under certain stress conditions. May act as a fidelity factor of the translation reaction, by catalyzing a one-codon backward translocation of tRNAs on improperly translocated ribosomes. Back-translocation proceeds from a post-translocation (POST) complex to a pre-translocation (PRE) complex, thus giving elongation factor G a second chance to translocate the tRNAs correctly. Binds to ribosomes in a GTP-dependent manner. The chain is Elongation factor 4 from Xanthobacter autotrophicus (strain ATCC BAA-1158 / Py2).